The primary structure comprises 1158 residues: ATP-dependent helicase/deoxyribonuclease subunit B (1158 aa).

The region spanning 1–275 (MTLHAYLGRA…QYFNQLYRFN (275 aa)) is the UvrD-like helicase ATP-binding domain. 8–15 (GRAGTGKS) is an ATP binding site. The UvrD-like helicase C-terminal domain maps to 269–583 (NQLYRFNNQD…SIGTMDLAKV (315 aa)). [4Fe-4S] cluster is bound by residues Cys-784, Cys-1112, Cys-1115, and Cys-1121.

Belongs to the helicase family. AddB/RexB type 1 subfamily. As to quaternary structure, heterodimer of AddA and AddB. Mg(2+) is required as a cofactor. [4Fe-4S] cluster serves as cofactor.

The heterodimer acts as both an ATP-dependent DNA helicase and an ATP-dependent, dual-direction single-stranded exonuclease. Recognizes the chi site generating a DNA molecule suitable for the initiation of homologous recombination. The AddB subunit has 5' -&gt; 3' nuclease activity but not helicase activity. In Staphylococcus aureus (strain MSSA476), this protein is ATP-dependent helicase/deoxyribonuclease subunit B.